A 114-amino-acid polypeptide reads, in one-letter code: Tyrosine-protein phosphatase 13 (114 aa).

Positions 1 to 114 (WRMLWEHNST…QFGQEGPITI (114 aa)) constitute a Tyrosine-protein phosphatase domain. A substrate-binding site is contributed by E82.

This sequence belongs to the protein-tyrosine phosphatase family.

It catalyses the reaction O-phospho-L-tyrosyl-[protein] + H2O = L-tyrosyl-[protein] + phosphate. The sequence is that of Tyrosine-protein phosphatase 13 (STY-13) from Styela plicata (Wrinkled sea squirt).